The following is a 124-amino-acid chain: MSPELYNIFYESHRGSWAILIILFLVSYFLIKAGKGKAGKILHMIVRLFFVIMLITGAGMLVYWQFAFLFIVKGVLAIVLIYAMEMLLTRTSKGTIGQQARIYWIVFITCLVLVALIGYNVISF.

The next 4 membrane-spanning stretches (helical) occupy residues 15–35 (GSWA…KAGK), 40–60 (KILH…GAGM), 61–81 (LVYW…IVLI), and 102–122 (IYWI…YNVI).

It belongs to the UPF0344 family.

The protein localises to the cell membrane. The protein is UPF0344 protein BH2983 of Halalkalibacterium halodurans (strain ATCC BAA-125 / DSM 18197 / FERM 7344 / JCM 9153 / C-125) (Bacillus halodurans).